A 487-amino-acid polypeptide reads, in one-letter code: Virulence sensor histidine kinase PhoQ (487 aa).

Topologically, residues 1–16 (MNKFARHFLPLSLRVR) are cytoplasmic. A helical transmembrane segment spans residues 17-37 (FLLATAGVVLVLSLAYGIVAL). Over 38 to 193 (VGYSVSFDKT…ELKRSYMVWS (156 aa)) the chain is Periplasmic. Positions 151 and 152 each coordinate a divalent metal cation. Residues 194 to 214 (WFVYVLAANLLLVIPLLWIAA) form a helical membrane-spanning segment. The HAMP domain occupies 215–266 (WWSLRPIEALAREVRELEDHHREMLNPETTRELTSLVRNLNQLLKSERERYN). Residues 215-487 (WWSLRPIEAL…GRQHPTQKEE (273 aa)) lie on the Cytoplasmic side of the membrane. Positions 274-481 (DLTHSLKTPL…RMEVVFGRQH (208 aa)) constitute a Histidine kinase domain. Position 277 is a phosphohistidine; by autocatalysis (His-277). Asn-386 contacts Mg(2+). ATP is bound by residues 386 to 394 (NVLDNACKY), 416 to 421 (DDGPGI), and 435 to 447 (RADT…GVGL). Gln-443 is a binding site for Mg(2+).

Homodimer.

The protein localises to the cell inner membrane. It carries out the reaction ATP + protein L-histidine = ADP + protein N-phospho-L-histidine.. Member of the two-component regulatory system PhoP/PhoQ which regulates the expression of genes involved in virulence and resistance to host defense antimicrobial peptides. In low periplasmic Mg(2+), PhoQ functions as a membrane-associated protein kinase that undergoes autophosphorylation and subsequently transfers the phosphate to PhoP, which results in the expression of PhoP-activated genes (PAG) and repression of PhoP-repressed genes (PRG). In high periplasmic Mg(2+), acts as a protein phosphatase that dephosphorylates phospho-PhoP, which results in the repression of PAG and may lead to expression of some PRG. The protein is Virulence sensor histidine kinase PhoQ (phoQ) of Salmonella paratyphi A (strain ATCC 9150 / SARB42).